Consider the following 213-residue polypeptide: Protein brother (213 aa).

The interval 189 to 213 (HTPQTPPEDHHHRGGPGLPRGPMGW) is disordered. Gly residues predominate over residues 203–213 (GPGLPRGPMGW).

It belongs to the CBF-beta family.

The protein resides in the nucleus. Regulates the DNA-binding properties of Runt. The sequence is that of Protein brother (Bro) from Drosophila melanogaster (Fruit fly).